A 115-amino-acid polypeptide reads, in one-letter code: MNPLIQSLTEGQLRSDVPNFRPGDTVRVHAKVVEGTRERIQIFEGVVISRKGQGISEMYTVRKISGGIGVERTFPIHTPRVDKIEVIRHGKVRRAKLYYLRALQGKAARIKEIRR.

Belongs to the bacterial ribosomal protein bL19 family.

This protein is located at the 30S-50S ribosomal subunit interface and may play a role in the structure and function of the aminoacyl-tRNA binding site. The chain is Large ribosomal subunit protein bL19 from Streptococcus pyogenes serotype M49 (strain NZ131).